Reading from the N-terminus, the 130-residue chain is Small ribosomal subunit protein uS9 (130 aa).

It belongs to the universal ribosomal protein uS9 family.

The chain is Small ribosomal subunit protein uS9 from Pseudomonas fluorescens (strain Pf0-1).